The primary structure comprises 623 residues: Replication protein A 70 kDa DNA-binding subunit (623 aa).

The residue at position 1 (methionine 1) is an N-acetylmethionine. Glycyl lysine isopeptide (Lys-Gly) (interchain with G-Cter in ubiquitin) cross-links involve residues lysine 22 and lysine 88. Positions 116-163 (VPYNEGYGQQQQQQQQQQQQAVPSPASAATPPASKPQPQNGSLGMGST) are disordered. Residues 124 to 154 (QQQQQQQQQQQQAVPSPASAATPPASKPQPQ) are compositionally biased toward low complexity. Lysine 172 and lysine 176 each carry N6-acetyllysine; alternate. Glycyl lysine isopeptide (Lys-Gly) (interchain with G-Cter in ubiquitin); alternate cross-links involve residues lysine 172 and lysine 176. Phosphothreonine is present on threonine 189. Residue lysine 192 forms a Glycyl lysine isopeptide (Lys-Gly) (interchain with G-Cter in ubiquitin) linkage. Threonine 200 is subject to Phosphothreonine. Positions 206–290 (WTICARVTNK…VKNDYEMTFN (85 aa)) form a DNA-binding region, OB. Residues lysine 229 and lysine 253 each participate in a glycyl lysine isopeptide (Lys-Gly) (interchain with G-Cter in ubiquitin) cross-link. Lysine 268 carries the post-translational modification N6-acetyllysine; alternate. Lysine 268 participates in a covalent cross-link: Glycyl lysine isopeptide (Lys-Gly) (interchain with G-Cter in ubiquitin); alternate. Residues lysine 276 and lysine 340 each participate in a glycyl lysine isopeptide (Lys-Gly) (interchain with G-Cter in ubiquitin) cross-link. Serine 393 is subject to Phosphoserine. Residue lysine 419 forms a Glycyl lysine isopeptide (Lys-Gly) (interchain with G-Cter in ubiquitin) linkage. A Glycyl lysine isopeptide (Lys-Gly) (interchain with G-Cter in SUMO) cross-link involves residue lysine 458. Lysine 467 is covalently cross-linked (Glycyl lysine isopeptide (Lys-Gly) (interchain with G-Cter in ubiquitin)). A C4-type zinc finger spans residues 490-512 (CPTQDCNKKVIDQQNGLYRCEKC). A Glycyl lysine isopeptide (Lys-Gly) (interchain with G-Cter in ubiquitin) cross-link involves residue lysine 562. A Glycyl lysine isopeptide (Lys-Gly) (interchain with G-Cter in SUMO) cross-link involves residue lysine 586.

It belongs to the replication factor A protein 1 family. Component of the canonical replication protein A complex (RPA), a heterotrimer composed of RPA1, RPA2 and RPA3. The DNA-binding activity may reside exclusively on the RPA1 subunit. Interacts with PRPF19; the PRP19-CDC5L complex is recruited to the sites of DNA repair where it ubiquitinates the replication protein A complex (RPA). Interacts with RIPK1. Interacts with the polymerase alpha subunit POLA1/p180; this interaction stabilizes the replicative complex and reduces the misincorporation rate of DNA polymerase alpha by acting as a fidelity clamp. Interacts with RAD51 and SENP6 to regulate DNA repair. Interacts with HELB; this interaction promotes HELB recruitment to chromatin following DNA damage. Interacts with PRIMPOL; leading to recruit PRIMPOL on chromatin and stimulate its DNA primase activity. Interacts with XPA; the interaction is direct and associates XPA with the RPA complex. Interacts with ETAA1; the interaction is direct and promotes ETAA1 recruitment at stalled replication forks. Interacts with RPA1; this interaction associates HROB with the RPA complex. Interacts (when poly-ADP-ribosylated) with HTATSF1. In terms of processing, DNA damage-induced 'Lys-63'-linked polyubiquitination by PRPF19 mediates ATRIP recruitment to the RPA complex at sites of DNA damage and activation of ATR. Ubiquitinated by RFWD3 at stalled replication forks in response to DNA damage: ubiquitination by RFWD3 does not lead to degradation by the proteasome and promotes removal of the RPA complex from stalled replication forks, promoting homologous recombination. Sumoylated on lysine residues Lys-458 and Lys-586, with Lys-458 being the major site. Sumoylation promotes recruitment of RAD51 to the DNA damage foci to initiate DNA repair through homologous recombination. Desumoylated by SENP6. Post-translationally, poly-ADP-ribosylated by PARP1; promoting recruitment of HTATSF1.

The protein localises to the nucleus. The protein resides in the PML body. As part of the heterotrimeric replication protein A complex (RPA/RP-A), binds and stabilizes single-stranded DNA intermediates, that form during DNA replication or upon DNA stress. It prevents their reannealing and in parallel, recruits and activates different proteins and complexes involved in DNA metabolism. Thereby, it plays an essential role both in DNA replication and the cellular response to DNA damage. In the cellular response to DNA damage, the RPA complex controls DNA repair and DNA damage checkpoint activation. Through recruitment of ATRIP activates the ATR kinase a master regulator of the DNA damage response. It is required for the recruitment of the DNA double-strand break repair factors RAD51 and RAD52 to chromatin in response to DNA damage. Also recruits to sites of DNA damage proteins like XPA and XPG that are involved in nucleotide excision repair and is required for this mechanism of DNA repair. Also plays a role in base excision repair (BER) probably through interaction with UNG. Also recruits SMARCAL1/HARP, which is involved in replication fork restart, to sites of DNA damage. May also play a role in telomere maintenance. The chain is Replication protein A 70 kDa DNA-binding subunit (Rpa1) from Mus musculus (Mouse).